Reading from the N-terminus, the 98-residue chain is uncharacterized protein (98 aa).

An N-terminal signal peptide occupies residues 1–23 (MKYVALAFVLSLVILQISAQVGA).

As to expression, nacreous layer of shell (at protein level). Expressed primarily in the mantle with highest level in the mantle pallium and lower level in the mantle edge.

It localises to the secreted. This is an uncharacterized protein from Pinctada maxima (Silver-lipped pearl oyster).